A 528-amino-acid polypeptide reads, in one-letter code: Protein MGF 505-7R (528 aa).

Belongs to the asfivirus MGF 505 family. As to quaternary structure, interacts with host STING1. Interacts with host JAK1; this interaction leads to JAK1 degradation. Interacts with host JAK2; this interaction leads to JAK2 degradation. Interacts with host RELA; this interaction inhibits NF-kappa-B promoter activity.

It localises to the host cytoplasm. Its function is as follows. Plays a role in virus cell tropism, and may be required for efficient virus replication in macrophages. Interferes with host NF-kappa-B promoter activity mediated by TLR8. Mechanistically, inhibits the phosphorylation and subsequent nuclear translocation of host NF-kappa-B RELA subunit downstream of TLR8. Promotes the expression of the autophagy-related protein host ULK1 to degrade host STING and inhibit the interferon response. Also inhibits JAK1- and JAK2-mediated signaling and thus negatively regulates the IFN-gamma signaling. This chain is Protein MGF 505-7R, found in African swine fever virus (isolate Pig/Kenya/KEN-50/1950) (ASFV).